Reading from the N-terminus, the 336-residue chain is Inositol 2-dehydrogenase (336 aa).

This sequence belongs to the Gfo/Idh/MocA family. As to quaternary structure, homotetramer.

The catalysed reaction is myo-inositol + NAD(+) = scyllo-inosose + NADH + H(+). Its function is as follows. Involved in the oxidation of myo-inositol (MI) to 2-keto-myo-inositol (2KMI or 2-inosose). In Acidiphilium cryptum (strain JF-5), this protein is Inositol 2-dehydrogenase.